The primary structure comprises 184 residues: Ribosome-recycling factor (184 aa).

Belongs to the RRF family.

The protein resides in the cytoplasm. In terms of biological role, responsible for the release of ribosomes from messenger RNA at the termination of protein biosynthesis. May increase the efficiency of translation by recycling ribosomes from one round of translation to another. This is Ribosome-recycling factor from Acinetobacter baylyi (strain ATCC 33305 / BD413 / ADP1).